A 314-amino-acid chain; its full sequence is Mitochondrial 2-oxoglutarate/malate carrier protein (314 aa).

The residue at position 2 (alanine 2) is an N-acetylalanine. Serine 6 is subject to Phosphoserine. Solcar repeat units lie at residues 23–108 (VKFL…LFER), 117–208 (PGFL…SKQF), and 217–306 (DNIL…MNKA). The helical transmembrane segment at 24–42 (KFLFGGLAGMGATVFVQPL) threads the bilayer. Lysine 57 is modified (N6-succinyllysine). Lysine 73 carries the post-translational modification N6-acetyllysine. A helical transmembrane segment spans residues 83-101 (GLSAGLLRQATYTTTRLGI). Tyrosine 102 carries the phosphotyrosine modification. Transmembrane regions (helical) follow at residues 119–140 (FLLK…GTPA), 183–202 (GCIP…LASY), and 222–240 (HFCA…SMPV). At lysine 256 the chain carries N6-acetyllysine. Residues 281–300 (GFTPYYARLGPHTVLTFIFL) form a helical membrane-spanning segment.

Belongs to the mitochondrial carrier (TC 2.A.29) family. In terms of assembly, interacts with SMIM26. As to expression, most highly expressed in the heart.

It localises to the mitochondrion inner membrane. It catalyses the reaction (S)-malate(in) + 2-oxoglutarate(out) = (S)-malate(out) + 2-oxoglutarate(in). The catalysed reaction is malonate(in) + 2-oxoglutarate(out) = malonate(out) + 2-oxoglutarate(in). It carries out the reaction succinate(in) + 2-oxoglutarate(out) = succinate(out) + 2-oxoglutarate(in). The enzyme catalyses maleate(in) + 2-oxoglutarate(out) = maleate(out) + 2-oxoglutarate(in). It catalyses the reaction oxaloacetate(in) + 2-oxoglutarate(out) = oxaloacetate(out) + 2-oxoglutarate(in). Catalyzes the transport of 2-oxoglutarate (alpha-oxoglutarate) across the inner mitochondrial membrane in an electroneutral exchange for malate. Can also exchange 2-oxoglutarate for other dicarboxylic acids such as malonate, succinate, maleate and oxaloacetate, although with lower affinity. Contributes to several metabolic processes, including the malate-aspartate shuttle, the oxoglutarate/isocitrate shuttle, in gluconeogenesis from lactate, and in nitrogen metabolism. Maintains mitochondrial fusion and fission events, and the organization and morphology of cristae. Involved in the regulation of apoptosis. Helps protect from cytotoxic-induced apoptosis by modulating glutathione levels in mitochondria. The chain is Mitochondrial 2-oxoglutarate/malate carrier protein (SLC25A11) from Homo sapiens (Human).